The primary structure comprises 202 residues: Large ribosomal subunit protein uL13 (202 aa).

The protein belongs to the universal ribosomal protein uL13 family. Component of the large ribosomal subunit (LSU). Mature N.crassa ribosomes consist of a small (40S) and a large (60S) subunit. The 40S small subunit contains 1 molecule of ribosomal RNA (18S rRNA) and at least 32 different proteins. The large 60S subunit contains 3 rRNA molecules (26S, 5.8S and 5S rRNA) and at least 42 different proteins.

It is found in the cytoplasm. Functionally, component of the ribosome, a large ribonucleoprotein complex responsible for the synthesis of proteins in the cell. The small ribosomal subunit (SSU) binds messenger RNAs (mRNAs) and translates the encoded message by selecting cognate aminoacyl-transfer RNA (tRNA) molecules. The large subunit (LSU) contains the ribosomal catalytic site termed the peptidyl transferase center (PTC), which catalyzes the formation of peptide bonds, thereby polymerizing the amino acids delivered by tRNAs into a polypeptide chain. The nascent polypeptides leave the ribosome through a tunnel in the LSU and interact with protein factors that function in enzymatic processing, targeting, and the membrane insertion of nascent chains at the exit of the ribosomal tunnel. This Neurospora crassa (strain ATCC 24698 / 74-OR23-1A / CBS 708.71 / DSM 1257 / FGSC 987) protein is Large ribosomal subunit protein uL13 (crp-46).